A 272-amino-acid chain; its full sequence is Shikimate dehydrogenase (NADP(+)) (272 aa).

Shikimate-binding positions include 14–16 (SKS) and T61. K65 serves as the catalytic Proton acceptor. E77 lines the NADP(+) pocket. Shikimate-binding residues include N86 and D102. Residues 126-130 (GAGGA), 149-154 (NRTVSR), and M213 contribute to the NADP(+) site. Y215 is a shikimate binding site. G237 lines the NADP(+) pocket.

This sequence belongs to the shikimate dehydrogenase family. In terms of assembly, homodimer.

The catalysed reaction is shikimate + NADP(+) = 3-dehydroshikimate + NADPH + H(+). It participates in metabolic intermediate biosynthesis; chorismate biosynthesis; chorismate from D-erythrose 4-phosphate and phosphoenolpyruvate: step 4/7. Its function is as follows. Involved in the biosynthesis of the chorismate, which leads to the biosynthesis of aromatic amino acids. Catalyzes the reversible NADPH linked reduction of 3-dehydroshikimate (DHSA) to yield shikimate (SA). The chain is Shikimate dehydrogenase (NADP(+)) from Escherichia coli O45:K1 (strain S88 / ExPEC).